We begin with the raw amino-acid sequence, 159 residues long: C-type lectin 1 (159 aa).

Positions 1-23 (MGRFIFISFGLLVVFFFLSGAKG) are cleaved as a signal peptide. 4 cysteine pairs are disulfide-bonded: Cys26-Cys37, Cys54-Cys155, Cys61-Cys157, and Cys130-Cys147. Residues 33–156 (MYGLCYKIFD…CKVKNAFLCQ (124 aa)) form the C-type lectin domain. N-linked (GlcNAc...) asparagine glycosylation occurs at Asn118. A Sugar-binding motif is present at residues 119–121 (LTD). Ca(2+) contacts are provided by Asp121, Asp127, and Asn143.

Belongs to the true venom lectin family. As to quaternary structure, homodimer; disulfide-linked. As to expression, expressed by the venom gland.

It is found in the secreted. In terms of biological role, lectin which recognizes specific carbohydrate structures and agglutinates a variety of animal cells by binding to cell-surface glycoproteins and glycolipids. May be a calcium-dependent lectin. The polypeptide is C-type lectin 1 (Bitis gabonica (Gaboon adder)).